Here is a 402-residue protein sequence, read N- to C-terminus: Cholinephosphotransferase 1 (402 aa).

At 1 to 62 (MGLAEGLAAR…LVEKVPLWLA (62 aa)) the chain is on the cytoplasmic side. A helical transmembrane segment spans residues 63 to 83 (PNTITMVGLLLNVLSTLILVC). Asn-64 is a binding site for CDP-choline. Topologically, residues 84–93 (YCPTATEGAP) are lumenal. The helical transmembrane segment at 94 to 118 (FWTYLLCAIGLFVYQSLDAIDGKQA) threads the bilayer. Residues Asp-111 and Asp-114 each coordinate Mg(2+). Arg-119 contacts CDP-choline. Over 119–125 (RRTNSSS) the chain is Cytoplasmic. The chain crosses the membrane as a helical span at residues 126–150 (PLGEMFDHGCDSISIVFVNLGTIAA). Asp-132 provides a ligand contact to Mg(2+). His-133 (proton acceptor) is an active-site residue. Mg(2+) is bound at residue Asp-136. Topologically, residues 151-160 (VRLGTLPGWM) are lumenal. The helical transmembrane segment at 161–179 (FYCCFVGMFMFYCAQWQTY) threads the bilayer. Residues 180 to 190 (VCGTLKFGIID) are Cytoplasmic-facing. Residues 191–207 (VTELQISVTVMFLMTAV) form a helical membrane-spanning segment. Residues 208-222 (CGPELWDYEIPFTGL) are Lumenal-facing. The helical transmembrane segment at 223–248 (PMKTIPLLGIIGGTVYSCSNYFRVIL) threads the bilayer. The Cytoplasmic portion of the chain corresponds to 249 to 265 (SGGVGKNGSTVAGTSVL). Residues 266–281 (SPGLHIGLVLLLALMI) form a helical membrane-spanning segment. Residues 282 to 293 (YKKSTTNLFLQN) are Lumenal-facing. The chain crosses the membrane as a helical span at residues 294 to 316 (PCLYTLAFGFVSAKITIKLVIAH). At 317-329 (MTKSEISLQDTAF) the chain is on the cytoplasmic side. Residues 330 to 339 (IGPGLLFFNQ) traverse the membrane as a helical segment. Residues 340–346 (YFNSFID) lie on the Lumenal side of the membrane. A helical membrane pass occupies residues 347–376 (EYIVLWIAMVISFADLLRYCISVCLQIATH). Topologically, residues 377-402 (LRISVFRISSNQAAEQVQTQKQKLTD) are cytoplasmic.

It belongs to the CDP-alcohol phosphatidyltransferase class-I family. In terms of assembly, homodimer. Mg(2+) is required as a cofactor. Requires Mn(2+) as cofactor.

Its subcellular location is the golgi apparatus membrane. It carries out the reaction CDP-choline + a 1,2-diacyl-sn-glycerol = a 1,2-diacyl-sn-glycero-3-phosphocholine + CMP + H(+). It catalyses the reaction 1,2-dioctanoyl-sn-glycerol + CDP-choline = 1,2-dioctanoyl-sn-glycero-3-phosphocholine + CMP + H(+). The catalysed reaction is 1-octadecanoyl-2-(5Z,8Z,11Z,14Z-eicosatetraenoyl)-sn-glycerol + CDP-choline = 1-octadecanoyl-2-(5Z,8Z,11Z,14Z-eicosatetraenoyl)-sn-glycero-3-phosphocholine + CMP + H(+). The enzyme catalyses 1-hexadecanoyl-2-(9Z-octadecenoyl)-sn-glycerol + CDP-choline = 1-hexadecanoyl-2-(9Z-octadecenoyl)-sn-glycero-3-phosphocholine + CMP + H(+). It carries out the reaction 1-hexadecanoyl-2-(4Z,7Z,10Z,13Z,16Z,19Z-docosahexaenoyl)-sn-glycerol + CDP-choline = 1-hexadecanoyl-2-(4Z,7Z,10Z,13Z,16Z,19Z-docosahexaenoyl)-sn-glycero-3-phosphocholine + CMP + H(+). It participates in phospholipid metabolism; phosphatidylcholine biosynthesis; phosphatidylcholine from phosphocholine: step 2/2. Functionally, catalyzes the final step of de novo phosphatidylcholine (PC) synthesis, i.e. the transfer of choline phosphate from CDP-choline to the free hydroxyl of a diacylglycerol (DAG), producing a PC. It thereby plays a central role in the formation and maintenance of vesicular membranes. Shows a high preference for CDP-choline over CDP-ethanolamine as substrate. The sequence is that of Cholinephosphotransferase 1 (chpt1) from Xenopus laevis (African clawed frog).